The following is a 260-amino-acid chain: MLEKVKNIIVVLSGKGGVGKSTVSTQLSLALRKNGFKVGLLDIDLCGPSVPYLLGLEGRDIFQCDEGWVPVYTDESQTLAVMSIGFLLKNREDPVIWRGPKKTMMIRQFLTDVRWDELDYLIIDTPPGTSDEHITVMECLKEVGCHGAIIVTTPQEVALDDVRKEITFCKKTSINILGIVENMSGFVCPHCTSCTNIFSSNGGTSLANYAQVPHLGTLPIDPRVGVLAGSTTSVLDELPDSTTAEVLTHIVEKLKTIFVS.

Position 14–21 (14–21 (GKGGVGKS)) interacts with ATP. Cys-188 and Cys-191 together coordinate [4Fe-4S] cluster.

Belongs to the Mrp/NBP35 ATP-binding proteins family. NUBP2/CFD1 subfamily. As to quaternary structure, heterotetramer of 2 Nubp1 and 2 Nubp2 chains. It depends on [4Fe-4S] cluster as a cofactor.

Its subcellular location is the cytoplasm. Functionally, component of the cytosolic iron-sulfur (Fe/S) protein assembly (CIA) machinery. Required for maturation of extramitochondrial Fe-S proteins. The Nubp1-Nubp2 heterotetramer forms a Fe-S scaffold complex, mediating the de novo assembly of an Fe-S cluster and its transfer to target apoproteins. This chain is Cytosolic Fe-S cluster assembly factor Nubp2 homolog 2, found in Drosophila yakuba (Fruit fly).